The primary structure comprises 189 residues: Large ribosomal subunit protein bL9 (189 aa).

The protein belongs to the bacterial ribosomal protein bL9 family.

Binds to the 23S rRNA. The protein is Large ribosomal subunit protein bL9 of Cereibacter sphaeroides (strain ATCC 17025 / ATH 2.4.3) (Rhodobacter sphaeroides).